A 244-amino-acid polypeptide reads, in one-letter code: Aspartate/glutamate leucyltransferase (244 aa).

The protein belongs to the R-transferase family. Bpt subfamily.

It localises to the cytoplasm. It catalyses the reaction N-terminal L-glutamyl-[protein] + L-leucyl-tRNA(Leu) = N-terminal L-leucyl-L-glutamyl-[protein] + tRNA(Leu) + H(+). It carries out the reaction N-terminal L-aspartyl-[protein] + L-leucyl-tRNA(Leu) = N-terminal L-leucyl-L-aspartyl-[protein] + tRNA(Leu) + H(+). Functions in the N-end rule pathway of protein degradation where it conjugates Leu from its aminoacyl-tRNA to the N-termini of proteins containing an N-terminal aspartate or glutamate. The protein is Aspartate/glutamate leucyltransferase of Bordetella parapertussis (strain 12822 / ATCC BAA-587 / NCTC 13253).